A 558-amino-acid polypeptide reads, in one-letter code: Potassium-transporting ATPase potassium-binding subunit (558 aa).

A run of 12 helical transmembrane segments spans residues 1-21 (MSIV…SRYL), 60-80 (IKHF…LLLI), 129-149 (VITF…IAML), 169-189 (FIVR…ISQG), 246-266 (WSNY…VFLF), 281-301 (IMIF…CLYF), 326-346 (FGIG…TGTV), 353-373 (LTPL…VFGG), 376-396 (VGLM…SLMI), 415-435 (IALS…LAFI), 485-505 (IVML…VSSL), and 523-543 (LFFS…TFLP).

This sequence belongs to the KdpA family. As to quaternary structure, the system is composed of three essential subunits: KdpA, KdpB and KdpC.

Its subcellular location is the cell membrane. Part of the high-affinity ATP-driven potassium transport (or Kdp) system, which catalyzes the hydrolysis of ATP coupled with the electrogenic transport of potassium into the cytoplasm. This subunit binds the extracellular potassium ions and delivers the ions to the membrane domain of KdpB through an intramembrane tunnel. This Staphylococcus haemolyticus (strain JCSC1435) protein is Potassium-transporting ATPase potassium-binding subunit.